Reading from the N-terminus, the 219-residue chain is Transmembrane emp24 domain-containing protein 10 (219 aa).

An N-terminal signal peptide occupies residues Met1 to Ala31. Residues Met1–Glu142 are required for interaction with STX17. Over Ile32 to Arg185 the chain is Lumenal. The GOLD domain occupies Arg41 to Ser193. Positions Leu147–Thr178 are required for TMED10 and TMED2 cis-Golgi network localization. Dimethylated arginine occurs at positions 171 and 176. Residue Asn179 is glycosylated (N-linked (GlcNAc...) asparagine). The helical transmembrane segment at Val186–Phe206 threads the bilayer. Residues Gln204–Glu219 are interaction with COPG1. Over Tyr207 to Glu219 the chain is Cytoplasmic. The tract at residues Tyr207–Glu219 is interaction with ARF1 and IL1B. Residues Phe211–Phe212 carry the COPII vesicle coat-binding motif. A COPI vesicle coat-binding motif is present at residues Phe211–Glu219.

This sequence belongs to the EMP24/GP25L family. As to quaternary structure, predominantly dimeric and to a lesser extent monomeric in the ER. Monomer and dimer in ERGIC and cis-Golgi network. Forms homooligomer (via GOLD domain); the assembly is promoted by direct binding with leaderless cargos and may form a protein channel that facilitates cargo entry into the ERGIC. Forms heterooligomeric complexes with other members of the p24 family such as TMED2, TMED7 and TMED9. Interacts (via GOLD domain) with TMED2 (via GOLD domain); the complex is required for export of TMED10 from the ER to the cis-Golgi network; the complex is proposed to be involved in cis-Golgi network dynamics and / or biogenesis. Associates with the COPI vesicle coat subunits (coatomer). Tetramerization of the cytoplasmic domain at the Golgi membrane in vitro; the complex is proposed to interact with COPI coatomer and induce budding of the vesicles. Interacts with COPG1; the interaction involves TMED10 homodimer. Interacts with ARF1 (GDP-bound); the interaction probably involves a TMED10 oligomer. Interacts with SEC23A, SEC24B, SEC24C and SEC24D components of the coat protein complex II/COPII, indicative of an association of TMED10 with the COPII vesicle coat. Interacts with CD59. Interacts with MPPE1/PGAP5; the complex might recruit and sort GPI-anchored proteins to the ER-exit site, or the interaction might lead to recycling of PGAP5 between the ER and the Golgi. Interacts with F2LR1/PAR2. Interacts with KDELR2/ERD2; the interaction is disrupted by KDELR2 ligand. Found in a complex composed at least of SURF4, TMED2 and TMED10. Associates with the presenilin-dependent gamma-secretase complex. Interacts with STX17; the interaction is direct. Interacts with IL-1; the interaction is direct. Interacts with RAB21 (active GTP-bound form); the interaction is indirect and regulates TMED10 abundance and localization at the Golgi.

The protein localises to the endoplasmic reticulum membrane. It localises to the endoplasmic reticulum-Golgi intermediate compartment membrane. Its subcellular location is the golgi apparatus membrane. The protein resides in the golgi apparatus. It is found in the cis-Golgi network membrane. The protein localises to the trans-Golgi network membrane. It localises to the cytoplasmic vesicle. Its subcellular location is the secretory vesicle membrane. The protein resides in the cell membrane. It is found in the melanosome. In terms of biological role, cargo receptor involved in protein vesicular trafficking and quality control in the endoplasmic reticulum (ER) and Golgi. The p24 protein family is a group of transmembrane proteins that bind coat protein complex I/COPI and coat protein complex II/COPII involved in vesicular trafficking between the membranes. Acts at the lumenal side for incorporation of secretory cargo molecules into transport vesicles and involved in vesicle coat formation at the cytoplasmic side. Mainly functions in the early secretory pathway and cycles between the ER, ER-Golgi intermediate compartment (ERGIC) and Golgi, mediating cargo transport through COPI and COPII-coated vesicles. In COPII vesicle-mediated anterograde transport, involved in the transport of GPI-anchored proteins by acting together with TMED2 as their cargo receptor; the function specifically implies SEC24C and SEC24D of the COPII vesicle coat and lipid raft-like microdomains of the ER. Recognizes GPI anchors structural remodeled in the ER by the GPI inositol-deacylase/PGAP1 and the metallophosphoesterase MPPE1/PGAP5. In COPI vesicle-mediated retrograde transport, involved in the biogenesis of COPI vesicles and vesicle coat recruitment. Involved in trafficking of amyloid beta A4 protein and soluble APP-beta release (independent from the modulation of gamma-secretase activity). Involved in the KDELR2-mediated retrograde transport of the toxin A subunit (CTX-A-K63)together with COPI and the COOH terminus of KDELR2. On Golgi membranes, acts as a primary receptor for ARF1-GDP, a GTP-binding protein involved in COPI-vesicle formation. Increases coatomer-dependent GTPase-activating activity of ARFGAP2 which mediates the hydrolysis of ARF1-bound GTP and therefore modulates protein trafficking from the Golgi apparatus. Involved in the exocytic trafficking of G protein-coupled receptors F2LR1/PAR2 (trypsin and tryspin-like enzyme receptor), OPRM1 (opioid receptor) and P2RY4 (UTD and UDP receptor) from the Golgi to the plasma membrane, thus contributing to receptor resensitization. In addition to its cargo receptor activity, may also act as a protein channel after oligomerization, facilitating the post-translational entry of leaderless cytoplasmic cargo into the ERGIC. Involved in the translocation into ERGIC, the vesicle entry and the secretion of leaderless cargos (lacking the secretion signal sequence), including the mature form of interleukin 1/IL-1 family members, the alpha-crystallin B chain HSPB5, the carbohydrate-binding proteins galectin-1/LGALS1 and galectin-3/LGALS3, the microtubule-associated protein Tau/MAPT, and the annexin A1/ANXA1; the translocation process is dependent on cargo protein unfolding and enhanced by chaperones HSP90AB1 and HSP90B1/GRP9. Could also associates with the presenilin-dependent gamma-secretase complex in order to regulate gamma-cleavages of the amyloid beta A4 protein to yield amyloid-beta 40/Abeta40. This chain is Transmembrane emp24 domain-containing protein 10 (TMED10), found in Mesocricetus auratus (Golden hamster).